Here is a 177-residue protein sequence, read N- to C-terminus: Putative pre-16S rRNA nuclease (177 aa).

Belongs to the YqgF nuclease family.

It is found in the cytoplasm. In terms of biological role, could be a nuclease involved in processing of the 5'-end of pre-16S rRNA. The protein is Putative pre-16S rRNA nuclease of Psychrobacter sp. (strain PRwf-1).